Reading from the N-terminus, the 195-residue chain is Imidazoleglycerol-phosphate dehydratase (195 aa).

The protein belongs to the imidazoleglycerol-phosphate dehydratase family.

It is found in the cytoplasm. It catalyses the reaction D-erythro-1-(imidazol-4-yl)glycerol 3-phosphate = 3-(imidazol-4-yl)-2-oxopropyl phosphate + H2O. Its pathway is amino-acid biosynthesis; L-histidine biosynthesis; L-histidine from 5-phospho-alpha-D-ribose 1-diphosphate: step 6/9. The polypeptide is Imidazoleglycerol-phosphate dehydratase (Thermotoga maritima (strain ATCC 43589 / DSM 3109 / JCM 10099 / NBRC 100826 / MSB8)).